A 377-amino-acid polypeptide reads, in one-letter code: uncharacterized protein (377 aa).

5 disordered regions span residues 10–79, 91–141, 182–257, 265–284, and 289–326; these read YSDG…NVNN, KKNN…DKEE, EAKK…TTTT, ENEN…EPIE, and LEFN…KEEP. Composition is skewed to low complexity over residues 14–24, 46–79, and 93–124; these read IPQPTITPPTQ, NKNN…NVNN, and NNNN…FNDN. Basic and acidic residues-rich tracts occupy residues 182 to 196 and 209 to 218; these read EAKK…KRGE and QTPDKKKKLE. Positions 221-257 are enriched in low complexity; sequence TSKNNNKSSTTKTELTNTTTNTSSTTNPTTDTTTTTT. 2 stretches are compositionally biased toward basic and acidic residues: residues 265–274 and 292–303; these read ENENQEKENN and NKFEEKPIKEVK. The segment covering 311-320 has biased composition (basic residues); sequence KRNKKRNNPK.

This is an uncharacterized protein from Dictyostelium discoideum (Social amoeba).